A 224-amino-acid chain; its full sequence is Inhibitor of apoptosis protein (224 aa).

The BIR repeat unit spans residues 29–92 (VDARNQSFAI…AFWSRNCGFM (64 aa)). The Zn(2+) site is built by cysteine 62, cysteine 65, histidine 82, and cysteine 89.

The protein belongs to the asfivirus IAP family. Interacts with subunit p17 of host CASP3.

The protein resides in the host cytoplasm. The protein localises to the virion. Functionally, prevents apoptosis of host cell by inhibiting caspase-3/CASP3 activation to promote the viral replication. Also induces the activation of host NF-kappaB. The sequence is that of Inhibitor of apoptosis protein (p27) from African swine fever virus (isolate Tick/South Africa/Wildebeeslaagte M1/1996) (ASFV).